The following is a 365-amino-acid chain: DNA replication and repair protein RecF (365 aa).

G30–T37 serves as a coordination point for ATP.

This sequence belongs to the RecF family.

It is found in the cytoplasm. In terms of biological role, the RecF protein is involved in DNA metabolism; it is required for DNA replication and normal SOS inducibility. RecF binds preferentially to single-stranded, linear DNA. It also seems to bind ATP. This is DNA replication and repair protein RecF from Azotobacter vinelandii (strain DJ / ATCC BAA-1303).